Reading from the N-terminus, the 337-residue chain is Equatorin (337 aa).

The first 20 residues, 1 to 20 (MDFILLIILSGVFLPDIISL), serve as a signal peptide directing secretion. The Lumenal segment spans residues 21-183 (QPIVGQEPGV…LSELEEIKLK (163 aa)). Residues 110–130 (SKPTASGEEEKPSESSRKTST) form a disordered region. Residues 117-126 (EEEKPSESSR) are compositionally biased toward basic and acidic residues. A glycan (N-linked (GlcNAc...) asparagine) is linked at Asn-145. Residues 184–204 (LMLGISLMTLVLLIPLLIFCF) form a helical membrane-spanning segment. Topologically, residues 205 to 337 (ATLYKLRHLR…LLNKEGSPSN (133 aa)) are cytoplasmic. A disordered region spans residues 259 to 283 (SSEMRRSRTRRSKSKPMDFSAGSNQ). Phosphoserine is present on Ser-336.

Interacts with SNAP25. Post-translationally, highly N- and O-glycosylated; contains sialic acid. MN9 epitope is O-glycosylated. Sperm specific, including germ cells (at protein level).

The protein localises to the cytoplasmic vesicle. The protein resides in the secretory vesicle. Its subcellular location is the acrosome membrane. It is found in the acrosome inner membrane. It localises to the acrosome outer membrane. The protein localises to the nucleus. The protein resides in the cytoplasm. Its function is as follows. Acrosomal membrane-anchored protein involved in the process of fertilization and in acrosome biogenesis. In Mus musculus (Mouse), this protein is Equatorin (Eqtn).